The chain runs to 355 residues: UDP-N-acetylglucosamine--N-acetylmuramyl-(pentapeptide) pyrophosphoryl-undecaprenol N-acetylglucosamine transferase (355 aa).

UDP-N-acetyl-alpha-D-glucosamine-binding positions include 15-17 (TGG), asparagine 127, arginine 163, serine 191, isoleucine 244, 263-268 (ALTVSE), and glutamine 288.

It belongs to the glycosyltransferase 28 family. MurG subfamily.

It localises to the cell inner membrane. It catalyses the reaction di-trans,octa-cis-undecaprenyl diphospho-N-acetyl-alpha-D-muramoyl-L-alanyl-D-glutamyl-meso-2,6-diaminopimeloyl-D-alanyl-D-alanine + UDP-N-acetyl-alpha-D-glucosamine = di-trans,octa-cis-undecaprenyl diphospho-[N-acetyl-alpha-D-glucosaminyl-(1-&gt;4)]-N-acetyl-alpha-D-muramoyl-L-alanyl-D-glutamyl-meso-2,6-diaminopimeloyl-D-alanyl-D-alanine + UDP + H(+). It functions in the pathway cell wall biogenesis; peptidoglycan biosynthesis. In terms of biological role, cell wall formation. Catalyzes the transfer of a GlcNAc subunit on undecaprenyl-pyrophosphoryl-MurNAc-pentapeptide (lipid intermediate I) to form undecaprenyl-pyrophosphoryl-MurNAc-(pentapeptide)GlcNAc (lipid intermediate II). This is UDP-N-acetylglucosamine--N-acetylmuramyl-(pentapeptide) pyrophosphoryl-undecaprenol N-acetylglucosamine transferase from Salmonella arizonae (strain ATCC BAA-731 / CDC346-86 / RSK2980).